Reading from the N-terminus, the 281-residue chain is MLSPAGKISLQSFTGSSLVFFVICMFNHYYGITNLVVNTLIVFFYAVNVYFFLKFFYNEFAFAIAIRAAFLGLVLVLGLYIKLVAPPNIQIFGGYMSVMALFHYSEFLAIAIVQPKQVSTDSFVINHSPQYTIAAVSSWVEFFIETYFFPGLKEIHWLSNIGLCVCILGEVLRKTAILTAGSNFNHLVQCEKSSDHVLVTHGVYAWFRHPSYVGWFYWSIGTQIILINPLCIPAYTLASWMFFKERIYIEESMLLSFFGQQYCDYQQQVGTGIPFIEGYKI.

Over 1–2 (ML) the chain is Cytoplasmic. A helical transmembrane segment spans residues 3–29 (SPAGKISLQSFTGSSLVFFVICMFNHY). Over 30-35 (YGITNL) the chain is Lumenal. The helical transmembrane segment at 36-53 (VVNTLIVFFYAVNVYFFL) threads the bilayer. Residues 54-58 (KFFYN) are Cytoplasmic-facing. A helical membrane pass occupies residues 59 to 85 (EFAFAIAIRAAFLGLVLVLGLYIKLVA). At 86 to 88 (PPN) the chain is on the lumenal side. A helical transmembrane segment spans residues 89 to 113 (IQIFGGYMSVMALFHYSEFLAIAIV). The Cytoplasmic portion of the chain corresponds to 114 to 118 (QPKQV). Residues 119–149 (STDSFVINHSPQYTIAAVSSWVEFFIETYFF) traverse the membrane as a helical segment. Over 150–155 (PGLKEI) the chain is Lumenal. A helical transmembrane segment spans residues 156 to 181 (HWLSNIGLCVCILGEVLRKTAILTAG). Topologically, residues 182-208 (SNFNHLVQCEKSSDHVLVTHGVYAWFR) are cytoplasmic. S-adenosyl-L-methionine is bound by residues glutamine 189, 196–199 (HVLV), tyrosine 204, and 209–212 (HPSY). A helical transmembrane segment spans residues 209–226 (HPSYVGWFYWSIGTQIIL). Topologically, residues 227 to 229 (INP) are lumenal. Residues 230–243 (LCIPAYTLASWMFF) form a helical membrane-spanning segment. Topologically, residues 244 to 281 (KERIYIEESMLLSFFGQQYCDYQQQVGTGIPFIEGYKI) are cytoplasmic. Arginine 246 is a binding site for substrate. Glutamate 250 serves as a coordination point for S-adenosyl-L-methionine.

This sequence belongs to the class VI-like SAM-binding methyltransferase superfamily. Isoprenylcysteine carboxyl methyltransferase family.

The protein localises to the endoplasmic reticulum membrane. It carries out the reaction [protein]-C-terminal S-[(2E,6E)-farnesyl]-L-cysteine + S-adenosyl-L-methionine = [protein]-C-terminal S-[(2E,6E)-farnesyl]-L-cysteine methyl ester + S-adenosyl-L-homocysteine. Catalyzes the post-translational methylation of isoprenylated C-terminal cysteine residues. The polypeptide is Protein-S-isoprenylcysteine O-methyltransferase (Tribolium castaneum (Red flour beetle)).